The chain runs to 118 residues: Small ribosomal subunit protein uS13 (118 aa).

A disordered region spans residues 94 to 118 (SLPLRGQRTKTNARTRKGPRKPIKK).

It belongs to the universal ribosomal protein uS13 family. Part of the 30S ribosomal subunit. Forms a loose heterodimer with protein S19. Forms two bridges to the 50S subunit in the 70S ribosome.

Its function is as follows. Located at the top of the head of the 30S subunit, it contacts several helices of the 16S rRNA. In the 70S ribosome it contacts the 23S rRNA (bridge B1a) and protein L5 of the 50S subunit (bridge B1b), connecting the 2 subunits; these bridges are implicated in subunit movement. Contacts the tRNAs in the A and P-sites. This Alteromonas mediterranea (strain DSM 17117 / CIP 110805 / LMG 28347 / Deep ecotype) protein is Small ribosomal subunit protein uS13.